We begin with the raw amino-acid sequence, 350 residues long: Variable large protein 4 (350 aa).

The N-terminal stretch at 1–18 (MRRRISAIIMTLFMVLVS) is a signal peptide. Cys-19 carries the N-palmitoyl cysteine lipid modification. Cys-19 carries the S-diacylglycerol cysteine lipid modification.

The protein belongs to the variable large protein (Vlp) family. Delta subfamily.

It is found in the cell outer membrane. The Vlp and Vsp proteins are antigenically distinct proteins, only one vlp or vsp gene is transcriptionally active at any one time. Switching between these genes is a mechanism of host immune response evasion. The polypeptide is Variable large protein 4 (Borrelia hermsii).